We begin with the raw amino-acid sequence, 344 residues long: Ferrochelatase (344 aa).

Fe cation contacts are provided by H191 and E271.

It belongs to the ferrochelatase family.

It localises to the cytoplasm. The enzyme catalyses heme b + 2 H(+) = protoporphyrin IX + Fe(2+). The protein operates within porphyrin-containing compound metabolism; protoheme biosynthesis; protoheme from protoporphyrin-IX: step 1/1. Catalyzes the ferrous insertion into protoporphyrin IX. The chain is Ferrochelatase from Pelagibacter ubique (strain HTCC1062).